The chain runs to 121 residues: General odorant-binding protein 72 (121 aa).

Cystine bridges form between C45-C101 and C90-C110.

It belongs to the PBP/GOBP family.

It is found in the secreted. In terms of biological role, present in the aqueous fluid surrounding olfactory sensory dendrites and are thought to aid in the capture and transport of hydrophobic odorants into and through this fluid. The polypeptide is General odorant-binding protein 72 (Obp72) (Anopheles gambiae (African malaria mosquito)).